The primary structure comprises 164 residues: Phosphopantetheine adenylyltransferase (164 aa).

Serine 10 contributes to the substrate binding site. ATP-binding positions include 10–11 (SF) and histidine 18. 3 residues coordinate substrate: lysine 42, threonine 79, and arginine 93. ATP-binding positions include 94–96 (GLR), glutamate 104, and 129–135 (VRPIAAT).

This sequence belongs to the bacterial CoaD family. In terms of assembly, homohexamer. Mg(2+) is required as a cofactor.

It localises to the cytoplasm. The catalysed reaction is (R)-4'-phosphopantetheine + ATP + H(+) = 3'-dephospho-CoA + diphosphate. Its pathway is cofactor biosynthesis; coenzyme A biosynthesis; CoA from (R)-pantothenate: step 4/5. In terms of biological role, reversibly transfers an adenylyl group from ATP to 4'-phosphopantetheine, yielding dephospho-CoA (dPCoA) and pyrophosphate. This Bradyrhizobium sp. (strain BTAi1 / ATCC BAA-1182) protein is Phosphopantetheine adenylyltransferase.